The chain runs to 128 residues: MQALLFISCGAILGASLRWAIGLLFNPLFSSFAFGTLIANLFGCLIIGVLLGLFWQFPQISSEWRLFLITGFLGSLTTFSSFSSEVVELFFNDKWLNGFCVLMMHLFGCLAMTVLGIWIYKICSQLLS.

Transmembrane regions (helical) follow at residues Leu-5 to Phe-25, Phe-34 to Phe-54, Phe-67 to Val-87, and Phe-99 to Ile-119. 2 residues coordinate Na(+): Gly-74 and Thr-77.

Belongs to the fluoride channel Fluc/FEX (TC 1.A.43) family.

The protein localises to the cell inner membrane. The catalysed reaction is fluoride(in) = fluoride(out). Its activity is regulated as follows. Na(+) is not transported, but it plays an essential structural role and its presence is essential for fluoride channel function. Its function is as follows. Fluoride-specific ion channel. Important for reducing fluoride concentration in the cell, thus reducing its toxicity. The chain is Fluoride-specific ion channel FluC from Haemophilus influenzae (strain PittGG).